A 181-amino-acid chain; its full sequence is Large ribosomal subunit protein uL6 (181 aa).

The protein belongs to the universal ribosomal protein uL6 family. Part of the 50S ribosomal subunit.

In terms of biological role, this protein binds to the 23S rRNA, and is important in its secondary structure. It is located near the subunit interface in the base of the L7/L12 stalk, and near the tRNA binding site of the peptidyltransferase center. The sequence is that of Large ribosomal subunit protein uL6 from Synechococcus sp. (strain JA-2-3B'a(2-13)) (Cyanobacteria bacterium Yellowstone B-Prime).